Reading from the N-terminus, the 126-residue chain is Large ribosomal subunit protein bL12 (126 aa).

This sequence belongs to the bacterial ribosomal protein bL12 family. As to quaternary structure, homodimer. Part of the ribosomal stalk of the 50S ribosomal subunit. Forms a multimeric L10(L12)X complex, where L10 forms an elongated spine to which 2 to 4 L12 dimers bind in a sequential fashion. Binds GTP-bound translation factors.

In terms of biological role, forms part of the ribosomal stalk which helps the ribosome interact with GTP-bound translation factors. Is thus essential for accurate translation. In Teredinibacter turnerae (strain ATCC 39867 / T7901), this protein is Large ribosomal subunit protein bL12.